Reading from the N-terminus, the 399-residue chain is MAKLTVKDVELKGKKVLVRVDFNVPVKDGVITNDNRITAALPTIKYILEQGGRAILFSHLGRVKEEADKEGKSLAPVAADLAAKLGQDVKFIPGVTRGAELEAAVNALEDGQVLLVENTRFEDVDGKKESKNDPELGKYWASLGDGIFVNDAFGTAHRAHASNVGISANVEKAVAGFLLENEIAYIQEAVENPERPFVAILGGSKVSDKIGVIENLLEKADKVLIGGGMTYTFFKAQGIEIGNSLVEEDKLDVAKALLEKSNGKLILPVDSKEANAFADYTEVKYTEGEAIDPGFLGLDIGPKSIAKFDEALTGAKTVVWNGPMGVFENPDFQAGTIGVMDAIVKQPGVKSIIGGGDSAAAAINLGYADKFSWISTGGGASMELLEGKELPGLAALTEK.

Substrate is bound by residues 21–23 (DFN), arginine 36, 59–62 (HLGR), arginine 120, and arginine 158. ATP is bound by residues lysine 209, glycine 297, glutamate 328, and 355–358 (GGDS).

The protein belongs to the phosphoglycerate kinase family. As to quaternary structure, monomer.

It localises to the cytoplasm. It carries out the reaction (2R)-3-phosphoglycerate + ATP = (2R)-3-phospho-glyceroyl phosphate + ADP. It functions in the pathway carbohydrate degradation; glycolysis; pyruvate from D-glyceraldehyde 3-phosphate: step 2/5. The sequence is that of Phosphoglycerate kinase from Streptococcus thermophilus (strain ATCC BAA-491 / LMD-9).